The chain runs to 241 residues: uncharacterized protein (241 aa).

In terms of domain architecture, HTH cro/C1-type spans 32-86; that stretch reads LKKWRNLFNIQQIELAKYLNVSPSVISDYEVGRRKNPGVNIIKKYVLALIEIDKE. Residues 43–62 constitute a DNA-binding region (H-T-H motif); it reads QIELAKYLNVSPSVISDYEV.

This is an uncharacterized protein from Methanocaldococcus jannaschii (strain ATCC 43067 / DSM 2661 / JAL-1 / JCM 10045 / NBRC 100440) (Methanococcus jannaschii).